A 157-amino-acid polypeptide reads, in one-letter code: UPF0303 protein NT01EI_1570 (157 aa).

The protein belongs to the UPF0303 family.

The sequence is that of UPF0303 protein NT01EI_1570 from Edwardsiella ictaluri (strain 93-146).